The following is a 201-amino-acid chain: Large ribosomal subunit protein uL4 (201 aa).

Residues 45–71 (AQKTRAEVTGSGKKPWRQKGTGRARAG) are disordered.

Belongs to the universal ribosomal protein uL4 family. In terms of assembly, part of the 50S ribosomal subunit.

Functionally, one of the primary rRNA binding proteins, this protein initially binds near the 5'-end of the 23S rRNA. It is important during the early stages of 50S assembly. It makes multiple contacts with different domains of the 23S rRNA in the assembled 50S subunit and ribosome. Its function is as follows. Forms part of the polypeptide exit tunnel. The polypeptide is Large ribosomal subunit protein uL4 (Shewanella pealeana (strain ATCC 700345 / ANG-SQ1)).